A 119-amino-acid chain; its full sequence is DNA-binding protein inhibitor ID-3 (119 aa).

The bHLH domain occupies 28-80 (RGKSPSTEEPLSLLDDMNHCYSRLRELVPGVPRGTQLSQVEILQRVIDYILDL). Positions 35-87 (EEPLSLLDDMNHCYSRLRELVPGVPRGTQLSQVEILQRVIDYILDLQVVLAEP) are interaction with IFI204.

As to quaternary structure, homodimer, and heterodimer with other HLH proteins. Interacts with CLOCK and BMAL1. Interacts with COPS5 and COPS7A. Interacts with IFI204. Interacts with GATA4 and NKX2-5. Interacts with ANKRD2; both proteins cooperate in myoblast differentiation. Polyubiquitinated; which is favored by Ifi204 and leads to proteasomal degradation. In terms of tissue distribution, expressed by myoblasts (at protein level).

It is found in the nucleus. The protein localises to the cytoplasm. In terms of biological role, transcriptional regulator (lacking a basic DNA binding domain) which negatively regulates the basic helix-loop-helix (bHLH) transcription factors by forming heterodimers and inhibiting their DNA binding and transcriptional activity. Implicated in regulating a variety of cellular processes, including cellular growth, senescence, differentiation, apoptosis, angiogenesis, and neoplastic transformation. Involved in myogenesis by inhibiting skeletal muscle and cardiac myocyte differentiation and promoting muscle precursor cells proliferation. Inhibits the binding of E2A-containing protein complexes to muscle creatine kinase E-box enhancer. Regulates the circadian clock by repressing the transcriptional activator activity of the CLOCK-BMAL1 heterodimer. This chain is DNA-binding protein inhibitor ID-3 (Id3), found in Mus musculus (Mouse).